Reading from the N-terminus, the 487-residue chain is UDP-N-acetylmuramate--L-alanine ligase (487 aa).

Position 124–130 (124–130 (GTHGKTT)) interacts with ATP.

The protein belongs to the MurCDEF family.

The protein resides in the cytoplasm. The enzyme catalyses UDP-N-acetyl-alpha-D-muramate + L-alanine + ATP = UDP-N-acetyl-alpha-D-muramoyl-L-alanine + ADP + phosphate + H(+). Its pathway is cell wall biogenesis; peptidoglycan biosynthesis. In terms of biological role, cell wall formation. The polypeptide is UDP-N-acetylmuramate--L-alanine ligase (Acaryochloris marina (strain MBIC 11017)).